The sequence spans 238 residues: tRNA1(Val) (adenine(37)-N6)-methyltransferase (238 aa).

This sequence belongs to the methyltransferase superfamily. tRNA (adenine-N(6)-)-methyltransferase family.

Its subcellular location is the cytoplasm. The enzyme catalyses adenosine(37) in tRNA1(Val) + S-adenosyl-L-methionine = N(6)-methyladenosine(37) in tRNA1(Val) + S-adenosyl-L-homocysteine + H(+). Functionally, specifically methylates the adenine in position 37 of tRNA(1)(Val) (anticodon cmo5UAC). This is tRNA1(Val) (adenine(37)-N6)-methyltransferase from Shewanella sp. (strain W3-18-1).